A 282-amino-acid polypeptide reads, in one-letter code: F-box protein VBF (282 aa).

The F-box domain maps to 1 to 44 (MMMLPEACIANILAFTSPADAFSSSEVSSVFRLAGDSDFVWEKF).

Component of SCF(VBF) E3 ubiquitin ligase complex that interacts with VIP1. Interacts directly with SKP1A and VIP1. Forms a complex composed of VIP1, VBF and Agrobacterium virE2.

Component of SCF(VBF) E3 ubiquitin ligase complexes, which mediate the ubiquitination and subsequent proteasomal degradation of target proteins such as VIP1 and Agrobacterium virE2, after their implication in T-DNA translocation to the host nucleus (can functionally replace Agrobacterium VirF). Required during Agrobacterium-induced tumor formation. In Arabidopsis thaliana (Mouse-ear cress), this protein is F-box protein VBF (VBF).